Consider the following 439-residue polypeptide: Serine hydroxymethyltransferase (439 aa).

Residues leucine 119 and 123–125 (GHL) each bind (6S)-5,6,7,8-tetrahydrofolate. Lysine 228 bears the N6-(pyridoxal phosphate)lysine mark. Residue 370–372 (SPF) participates in (6S)-5,6,7,8-tetrahydrofolate binding.

The protein belongs to the SHMT family. As to quaternary structure, homodimer. It depends on pyridoxal 5'-phosphate as a cofactor.

Its subcellular location is the cytoplasm. The catalysed reaction is (6R)-5,10-methylene-5,6,7,8-tetrahydrofolate + glycine + H2O = (6S)-5,6,7,8-tetrahydrofolate + L-serine. Its pathway is one-carbon metabolism; tetrahydrofolate interconversion. It participates in amino-acid biosynthesis; glycine biosynthesis; glycine from L-serine: step 1/1. In terms of biological role, catalyzes the reversible interconversion of serine and glycine with tetrahydrofolate (THF) serving as the one-carbon carrier. This reaction serves as the major source of one-carbon groups required for the biosynthesis of purines, thymidylate, methionine, and other important biomolecules. Also exhibits THF-independent aldolase activity toward beta-hydroxyamino acids, producing glycine and aldehydes, via a retro-aldol mechanism. In Chlorobium phaeobacteroides (strain BS1), this protein is Serine hydroxymethyltransferase.